Reading from the N-terminus, the 858-residue chain is Myosin-K heavy chain (858 aa).

One can recognise a Myosin motor domain in the interval 7–820 (SGVDDLVLVS…TIFVMEDLLM (814 aa)). Position 100–107 (100–107 (GESGAGKT)) interacts with ATP. The segment at 121–265 (SPNNSSGGGI…GGGYGGSSKT (145 aa)) is disordered. 2 stretches are compositionally biased toward gly residues: residues 126 to 139 (SGGG…GNGG) and 157 to 182 (RGMG…SRGG). Positions 183 to 228 (GPPPTRGRGGPPPPIPQNRGAPPPVSNGGAPPPVARGPVAPPPTRG) are enriched in pro residues. The span at 233–245 (RGGGPANRGGRGG) shows a compositional bias: gly residues. Residues 712–722 (PHYIRCIKPND) are actin-binding. A tail region spans residues 821–858 (QKIDPIGYKNRVQAYKENEKLAQMKQGKHSMKQKCLIQ).

It belongs to the TRAFAC class myosin-kinesin ATPase superfamily. Myosin family.

Its subcellular location is the cytoplasm. In terms of biological role, myosins are actin-based motor molecules with ATPase activity. Involved in phagocytosis and motility, and in the maintenance and dynamics of cell cortex. In Dictyostelium discoideum (Social amoeba), this protein is Myosin-K heavy chain (myoK).